The chain runs to 541 residues: Neutral amino acid transporter B(0) (541 aa).

At Met1 the chain carries N-acetylmethionine. Residues 1 to 51 lie on the Cytoplasmic side of the membrane; sequence MVADPPRDSKGLAAAEPTANGGLALASIEDQGAAAGGYCGSRDQVRRCLRA. Residues 52 to 81 form a helical membrane-spanning segment; it reads NLLVLLTVVAVVAGVALGLGVSGAGGALAL. Residues 82 to 94 are Extracellular-facing; the sequence is GPERLSAFVFPGE. A helical membrane pass occupies residues 95-116; it reads LLLRLLRMIILPLVVCSLIGGA. Residues 117-130 are Cytoplasmic-facing; the sequence is ASLDPGALGRLGAW. A helical transmembrane segment spans residues 131 to 153; it reads ALLFFLVTTLLASALGVGLALAL. The Extracellular portion of the chain corresponds to 154–224; that stretch reads QPGAASAAIN…GTRVKVPVGQ (71 aa). N-linked (GlcNAc...) asparagine glycans are attached at residues Asn163 and Asn212. Residues 225–248 form a helical membrane-spanning segment; that stretch reads EVEGMNILGLVVFAIVFGVALRKL. Topologically, residues 249–257 are cytoplasmic; the sequence is GPEGELLIR. A helical transmembrane segment spans residues 258–285; the sequence is FFNSFNEATMVLVSWIMWYAPVGIMFLV. The Extracellular portion of the chain corresponds to 286–306; the sequence is AGKIVEMEDVGLLFARLGKYI. A helical transmembrane segment spans residues 307 to 328; sequence LCCLLGHAIHGLLVLPLIYFLF. Residues 329–333 lie on the Cytoplasmic side of the membrane; it reads TRKNP. The discontinuously helical intramembrane region spans 334 to 364; that stretch reads YRFLWGIVTPLATAFGTSSSSATLPLMMKCV. Topologically, residues 365–373 are cytoplasmic; that stretch reads EENNGVAKH. A helical membrane pass occupies residues 374–400; sequence ISRFILPIGATVNMDGAALFQCVAAVF. Residues Gly382, Thr384, and Asn386 each coordinate Na(+). Over 401 to 413 the chain is Extracellular; the sequence is IAQLSQQSLDFVK. The discontinuously helical intramembrane region spans 414 to 447; that stretch reads IITILVTATASSVGAAGIPAGGVLTLAIILEAVN. The Extracellular segment spans residues 448–460; that stretch reads LPVDHISLILAVD. The helical transmembrane segment at 461-482 threads the bilayer; sequence WLVDRSCTVLNVEGDALGAGLL. Positions 471 and 475 each coordinate Na(+). The Cytoplasmic segment spans residues 483–541; sequence QNYVDRTESRSTEPELIQVKSELPLDPLPVPTEEGNPLLKHYRGPAGDATVASEKESVM. Ser493 bears the Phosphoserine mark. Residue Thr494 is modified to Phosphothreonine. A phosphoserine mark is found at Ser503, Ser535, and Ser539. Residues 511–541 form a disordered region; the sequence is PVPTEEGNPLLKHYRGPAGDATVASEKESVM.

The protein belongs to the dicarboxylate/amino acid:cation symporter (DAACS) (TC 2.A.23) family. SLC1A5 subfamily. In terms of assembly, homotrimer. Interacts with ERVH48-1/suppressyn; may negatively regulate syncytialization. In terms of tissue distribution, placenta, lung, skeletal muscle, kidney, pancreas, and intestine. Expressed in CD34-positive hematopoietic progenitors (at protein level).

It is found in the cell membrane. The protein localises to the melanosome. It catalyses the reaction L-glutamine(out) + L-serine(in) + Na(+)(out) = L-glutamine(in) + L-serine(out) + Na(+)(in). It carries out the reaction L-glutamine(in) + L-serine(out) + Na(+)(out) = L-glutamine(out) + L-serine(in) + Na(+)(in). The enzyme catalyses L-threonine(in) + L-glutamine(out) + Na(+)(out) = L-threonine(out) + L-glutamine(in) + Na(+)(in). The catalysed reaction is L-threonine(out) + L-glutamine(in) + Na(+)(out) = L-threonine(in) + L-glutamine(out) + Na(+)(in). It catalyses the reaction L-asparagine(in) + L-glutamine(out) + Na(+)(out) = L-asparagine(out) + L-glutamine(in) + Na(+)(in). It carries out the reaction L-asparagine(out) + L-glutamine(in) + Na(+)(out) = L-asparagine(in) + L-glutamine(out) + Na(+)(in). The enzyme catalyses L-glutamine(in) + L-alanine(out) + Na(+)(out) = L-glutamine(out) + L-alanine(in) + Na(+)(in). The catalysed reaction is L-valine(out) + L-glutamine(in) + Na(+)(out) = L-valine(in) + L-glutamine(out) + Na(+)(in). It catalyses the reaction L-glutamine(in) + L-methionine(out) + Na(+)(out) = L-glutamine(out) + L-methionine(in) + Na(+)(in). It carries out the reaction L-glutamine(in) + L-glutamate(out) + Na(+)(out) + H(+)(out) = L-glutamine(out) + L-glutamate(in) + Na(+)(in) + H(+)(in). The enzyme catalyses D-serine(in) + L-glutamine(out) + Na(+)(out) = D-serine(out) + L-glutamine(in) + Na(+)(in). The catalysed reaction is D-serine(in) + L-alanine(out) + Na(+)(out) = D-serine(out) + L-alanine(in) + Na(+)(in). It catalyses the reaction nitrate(in) = nitrate(out). It carries out the reaction iodide(out) = iodide(in). The enzyme catalyses thiocyanate(in) = thiocyanate(out). Regulated by L-cysteine, which can either inhibit substrate influx or trigger substrate efflux without being transported itself. Functionally, sodium-coupled antiporter of neutral amino acids. In a tri-substrate transport cycle, exchanges neutral amino acids between the extracellular and intracellular compartments, coupled to the inward cotransport of at least one sodium ion. The preferred substrate is the essential amino acid L-glutamine, a precursor for biosynthesis of proteins, nucleotides and amine sugars as well as an alternative fuel for mitochondrial oxidative phosphorylation. Exchanges L-glutamine with other neutral amino acids such as L-serine, L-threonine and L-asparagine in a bidirectional way. Provides L-glutamine to proliferating stem and activated cells driving the metabolic switch toward cell differentiation. The transport cycle is usually pH-independent, with the exception of L-glutamate. Transports extracellular L-glutamate coupled to the cotransport of one proton and one sodium ion in exchange for intracellular L-glutamine counter-ion. May provide for L-glutamate uptake in glial cells regulating glutamine/glutamate cycle in the nervous system. Can transport D-amino acids. Mediates D-serine release from the retinal glia potentially affecting NMDA receptor function in retinal neurons. Displays sodium- and amino acid-dependent but uncoupled channel-like anion conductance with a preference SCN(-) &gt;&gt; NO3(-) &gt; I(-) &gt; Cl(-). Through binding of the fusogenic protein syncytin-1/ERVW-1 may mediate trophoblasts syncytialization, the spontaneous fusion of their plasma membranes, an essential process in placental development. In terms of biological role, (Microbial infection) Acts as a cell surface receptor for Feline endogenous virus RD114. (Microbial infection) Acts as a cell surface receptor for Baboon M7 endogenous virus. Its function is as follows. (Microbial infection) Acts as a cell surface receptor for type D simian retroviruses. This chain is Neutral amino acid transporter B(0), found in Homo sapiens (Human).